Here is a 99-residue protein sequence, read N- to C-terminus: Aspartyl/glutamyl-tRNA(Asn/Gln) amidotransferase subunit C (99 aa).

It belongs to the GatC family. In terms of assembly, heterotrimer of A, B and C subunits.

The enzyme catalyses L-glutamyl-tRNA(Gln) + L-glutamine + ATP + H2O = L-glutaminyl-tRNA(Gln) + L-glutamate + ADP + phosphate + H(+). It carries out the reaction L-aspartyl-tRNA(Asn) + L-glutamine + ATP + H2O = L-asparaginyl-tRNA(Asn) + L-glutamate + ADP + phosphate + 2 H(+). Its function is as follows. Allows the formation of correctly charged Asn-tRNA(Asn) or Gln-tRNA(Gln) through the transamidation of misacylated Asp-tRNA(Asn) or Glu-tRNA(Gln) in organisms which lack either or both of asparaginyl-tRNA or glutaminyl-tRNA synthetases. The reaction takes place in the presence of glutamine and ATP through an activated phospho-Asp-tRNA(Asn) or phospho-Glu-tRNA(Gln). This is Aspartyl/glutamyl-tRNA(Asn/Gln) amidotransferase subunit C from Mycolicibacterium smegmatis (strain ATCC 700084 / mc(2)155) (Mycobacterium smegmatis).